We begin with the raw amino-acid sequence, 102 residues long: GQGCSYGCHPKNISISVESCGITEFILTTICEGQCYLEDPVYISHDEQKICNGDWSYEVKHIEGCPVGVTYPVARNCECTACNTGNTYCGRLPGYVPSCPSF.

5 disulfide bridges follow: Cys-8/Cys-51, Cys-20/Cys-65, Cys-31/Cys-77, Cys-35/Cys-79, and Cys-82/Cys-89. A glycan (N-linked (GlcNAc...) asparagine) is linked at Asn-12.

The protein belongs to the glycoprotein hormones subunit beta family. As to quaternary structure, heterodimer of an alpha and a beta chain.

It localises to the secreted. Functionally, involved in gametogenesis and steroidogenesis. This chain is Gonadotropin subunit beta-1 (cgba), found in Thunnus obesus (Bigeye tuna).